The primary structure comprises 39 residues: Cytochrome b559 subunit beta (39 aa).

The helical transmembrane segment at 14-30 (WLAIHGLAVPTVSFLGS) threads the bilayer. His-18 is a binding site for heme.

Belongs to the PsbE/PsbF family. As to quaternary structure, heterodimer of an alpha subunit and a beta subunit. PSII is composed of 1 copy each of membrane proteins PsbA, PsbB, PsbC, PsbD, PsbE, PsbF, PsbH, PsbI, PsbJ, PsbK, PsbL, PsbM, PsbT, PsbX, PsbY, PsbZ, Psb30/Ycf12, at least 3 peripheral proteins of the oxygen-evolving complex and a large number of cofactors. It forms dimeric complexes. The cofactor is heme b.

The protein localises to the plastid. It is found in the chloroplast thylakoid membrane. Functionally, this b-type cytochrome is tightly associated with the reaction center of photosystem II (PSII). PSII is a light-driven water:plastoquinone oxidoreductase that uses light energy to abstract electrons from H(2)O, generating O(2) and a proton gradient subsequently used for ATP formation. It consists of a core antenna complex that captures photons, and an electron transfer chain that converts photonic excitation into a charge separation. The chain is Cytochrome b559 subunit beta from Allium textile (Textile onion).